Consider the following 596-residue polypeptide: Elongation factor 4 (596 aa).

Residues 2-184 (RNIRNFSIIA…AIVHRIPPPT (183 aa)) form the tr-type G domain. Residues 14 to 19 (DHGKST) and 131 to 134 (NKID) each bind GTP.

This sequence belongs to the TRAFAC class translation factor GTPase superfamily. Classic translation factor GTPase family. LepA subfamily.

The protein resides in the cell inner membrane. It catalyses the reaction GTP + H2O = GDP + phosphate + H(+). In terms of biological role, required for accurate and efficient protein synthesis under certain stress conditions. May act as a fidelity factor of the translation reaction, by catalyzing a one-codon backward translocation of tRNAs on improperly translocated ribosomes. Back-translocation proceeds from a post-translocation (POST) complex to a pre-translocation (PRE) complex, thus giving elongation factor G a second chance to translocate the tRNAs correctly. Binds to ribosomes in a GTP-dependent manner. The sequence is that of Elongation factor 4 from Xanthomonas oryzae pv. oryzae (strain PXO99A).